The sequence spans 246 residues: Probable transcriptional regulatory protein ACP_0521 (246 aa).

It belongs to the TACO1 family.

It localises to the cytoplasm. This chain is Probable transcriptional regulatory protein ACP_0521, found in Acidobacterium capsulatum (strain ATCC 51196 / DSM 11244 / BCRC 80197 / JCM 7670 / NBRC 15755 / NCIMB 13165 / 161).